We begin with the raw amino-acid sequence, 1483 residues long: Dynein axonemal assembly factor 1 homolog (1483 aa).

LRR repeat units follow at residues Arg-34 to Thr-56, Glu-57 to Ser-78, Lys-79 to Arg-100, Glu-101 to Val-122, Val-125 to Ile-146, and Thr-150 to Glu-171. The region spanning Pro-185–Trp-223 is the LRRCT domain. Disordered stretches follow at residues Ser-249 to Glu-282, Glu-300 to Ser-327, Asp-945 to Lys-986, and Ser-1167 to Asp-1213. Polar residues predominate over residues Asp-311–Ser-327. Residues Thr-1183–Gly-1196 are compositionally biased toward basic and acidic residues.

This sequence belongs to the DNAAF1 family.

Its subcellular location is the cell projection. It is found in the cilium. Functionally, cilium-specific protein required for cilia structures. This chain is Dynein axonemal assembly factor 1 homolog (dtr), found in Drosophila melanogaster (Fruit fly).